Reading from the N-terminus, the 154-residue chain is Myoglobin (154 aa).

In terms of domain architecture, Globin spans glycine 2–lysine 148. Serine 4 carries the phosphoserine modification. A nitrite-binding site is contributed by histidine 65. An O2-binding site is contributed by histidine 65. The residue at position 68 (threonine 68) is a Phosphothreonine. Histidine 94 is a heme b binding site.

This sequence belongs to the globin family. In terms of assembly, monomeric.

Its subcellular location is the cytoplasm. The protein resides in the sarcoplasm. The enzyme catalyses Fe(III)-heme b-[protein] + nitric oxide + H2O = Fe(II)-heme b-[protein] + nitrite + 2 H(+). The catalysed reaction is H2O2 + AH2 = A + 2 H2O. Functionally, monomeric heme protein which primary function is to store oxygen and facilitate its diffusion within muscle tissues. Reversibly binds oxygen through a pentacoordinated heme iron and enables its timely and efficient release as needed during periods of heightened demand. Depending on the oxidative conditions of tissues and cells, and in addition to its ability to bind oxygen, it also has a nitrite reductase activity whereby it regulates the production of bioactive nitric oxide. Under stress conditions, like hypoxia and anoxia, it also protects cells against reactive oxygen species thanks to its pseudoperoxidase activity. The protein is Myoglobin (MB) of Lycaon pictus (African wild dog).